The following is a 102-amino-acid chain: Citrate lyase acyl carrier protein (102 aa).

Serine 14 is modified (O-(phosphoribosyl dephospho-coenzyme A)serine).

It belongs to the CitD family. In terms of assembly, oligomer with a subunit composition of (alpha,beta,gamma)6.

The protein localises to the cytoplasm. Covalent carrier of the coenzyme of citrate lyase. This is Citrate lyase acyl carrier protein from Streptococcus equi subsp. zooepidemicus (strain H70).